Consider the following 316-residue polypeptide: MSTVQVPKLNTKDLLTLEELTKEEIISLIEFAIYLKKNKQEPLLQGKILGLIFDKHSTRTRVSFEAGMVQLGGHGMFLSGKEMQMGRGETVSDTAKVLSQYIDGIMIRTFSHADVEELAKESSIPVINGLTDDHHPCQALADLMTIYEETNTFKGIKLAYVGDGNNVCHSLLLASAKVGMHMTVATPVGYEPNEEIVKKALAIAKETGAEIEVLHDPELAVNEADFIYTDVWMSMGQEGEEEKYSLFQPYQINNELVKHAKQTYRFLHCLPAHREEEVTGKIIDGPQSIVFEQAGNRLHAQKALLVSLFKNVEEPS.

Carbamoyl phosphate-binding positions include 57 to 60, Q84, R108, and 135 to 138; these read STRT and HPCQ. Residues N166, D230, and 234-235 each bind L-ornithine; that span reads SM. Carbamoyl phosphate is bound by residues 269-270 and R297; that span reads CL.

It belongs to the aspartate/ornithine carbamoyltransferase superfamily. OTCase family.

It localises to the cytoplasm. It carries out the reaction carbamoyl phosphate + L-ornithine = L-citrulline + phosphate + H(+). It functions in the pathway amino-acid biosynthesis; L-arginine biosynthesis; L-arginine from L-ornithine and carbamoyl phosphate: step 1/3. In terms of biological role, reversibly catalyzes the transfer of the carbamoyl group from carbamoyl phosphate (CP) to the N(epsilon) atom of ornithine (ORN) to produce L-citrulline. In Bacillus cereus (strain ATCC 14579 / DSM 31 / CCUG 7414 / JCM 2152 / NBRC 15305 / NCIMB 9373 / NCTC 2599 / NRRL B-3711), this protein is Ornithine carbamoyltransferase (argF).